A 245-amino-acid chain; its full sequence is 1-(5-phosphoribosyl)-5-[(5-phosphoribosylamino)methylideneamino] imidazole-4-carboxamide isomerase (245 aa).

Asp12 serves as the catalytic Proton acceptor. Residue Asp131 is the Proton donor of the active site.

The protein belongs to the HisA/HisF family.

The protein resides in the cytoplasm. The catalysed reaction is 1-(5-phospho-beta-D-ribosyl)-5-[(5-phospho-beta-D-ribosylamino)methylideneamino]imidazole-4-carboxamide = 5-[(5-phospho-1-deoxy-D-ribulos-1-ylimino)methylamino]-1-(5-phospho-beta-D-ribosyl)imidazole-4-carboxamide. It functions in the pathway amino-acid biosynthesis; L-histidine biosynthesis; L-histidine from 5-phospho-alpha-D-ribose 1-diphosphate: step 4/9. This is 1-(5-phosphoribosyl)-5-[(5-phosphoribosylamino)methylideneamino] imidazole-4-carboxamide isomerase from Thermobifida fusca (strain YX).